We begin with the raw amino-acid sequence, 71 residues long: DNA-directed RNA polymerases II, IV and V subunit 10 (71 aa).

Positions 7, 10, 44, and 45 each coordinate Zn(2+).

This sequence belongs to the archaeal Rpo10/eukaryotic RPB10 RNA polymerase subunit family. As to quaternary structure, component of the RNA polymerase II, IV and V complexes. Interacts with NRPD1.

It localises to the nucleus. In terms of biological role, DNA-dependent RNA polymerase catalyzes the transcription of DNA into RNA using the four ribonucleoside triphosphates as substrates. Component of RNA polymerase II which synthesizes mRNA precursors and many functional non-coding RNAs. Pol II is the central component of the basal RNA polymerase II transcription machinery. It is composed of mobile elements that move relative to each other. Component of RNA polymerases IV and V which mediate short-interfering RNAs (siRNA) accumulation and subsequent RNA-directed DNA methylation-dependent (RdDM) transcriptional gene silencing (TGS) of endogenous repeated sequences, including transposable elements. The protein is DNA-directed RNA polymerases II, IV and V subunit 10 (NRPB10) of Arabidopsis thaliana (Mouse-ear cress).